The primary structure comprises 40 residues: Ferredoxin-2 (40 aa).

Residues 3-40 form the 2Fe-2S ferredoxin-type domain; that stretch reads YNIKLITPEGTKEITCSDSEYILDAAEEKGLDLPYSCR. Cys39 lines the [2Fe-2S] cluster pocket.

Belongs to the 2Fe2S plant-type ferredoxin family. [2Fe-2S] cluster serves as cofactor.

It localises to the plastid. The protein resides in the chloroplast. In terms of biological role, ferredoxins are iron-sulfur proteins that transfer electrons in a wide variety of metabolic reactions. The protein is Ferredoxin-2 of Pisum sativum (Garden pea).